Here is a 256-residue protein sequence, read N- to C-terminus: MARTIIAGNWKMNHGPRETREFVAGMKEKYQTPPAVETVICPPFVSISDLVNESPEWLKTGAQNVYFEESGAFTGEVSPKMLAELGVEYVIIGHSERRNIFAESDEEVNKKVRIALKYGIKPIICVGESDAQRNEGKTLEVVENQVKSALSEVVSDTLQNVVFAYEPVWAIGSGKAATGEDAEQVCKHIRSVISELNSSVADDIPVLYGGSVKPENLEEFMDQDNINGALVGGKSLVAETYCQLLEVARRFPGDEG.

9–11 serves as a coordination point for substrate; sequence NWK. His-94 (electrophile) is an active-site residue. Glu-166 functions as the Proton acceptor in the catalytic mechanism. Substrate contacts are provided by residues Gly-172, Ser-211, and 232 to 233; that span reads GG.

This sequence belongs to the triosephosphate isomerase family. In terms of assembly, homodimer.

It is found in the cytoplasm. It carries out the reaction D-glyceraldehyde 3-phosphate = dihydroxyacetone phosphate. Its pathway is carbohydrate biosynthesis; gluconeogenesis. It participates in carbohydrate degradation; glycolysis; D-glyceraldehyde 3-phosphate from glycerone phosphate: step 1/1. Functionally, involved in the gluconeogenesis. Catalyzes stereospecifically the conversion of dihydroxyacetone phosphate (DHAP) to D-glyceraldehyde-3-phosphate (G3P). This Natranaerobius thermophilus (strain ATCC BAA-1301 / DSM 18059 / JW/NM-WN-LF) protein is Triosephosphate isomerase.